The following is a 267-amino-acid chain: Adenosine 5'-phosphosulfate reductase (267 aa).

Residues 1 to 29 (MPPFATIPATERNSAAQHQDPSPMSQPFD) form a disordered region. Polar residues predominate over residues 11-25 (ERNSAAQHQDPSPMS). Cysteine 139, cysteine 140, cysteine 228, and cysteine 231 together coordinate [4Fe-4S] cluster. Residue cysteine 256 is the Nucleophile; cysteine thiosulfonate intermediate of the active site.

This sequence belongs to the PAPS reductase family. CysH subfamily. [4Fe-4S] cluster is required as a cofactor.

The protein localises to the cytoplasm. It carries out the reaction [thioredoxin]-disulfide + sulfite + AMP + 2 H(+) = adenosine 5'-phosphosulfate + [thioredoxin]-dithiol. It participates in sulfur metabolism; hydrogen sulfide biosynthesis; sulfite from sulfate. Its function is as follows. Catalyzes the formation of sulfite from adenosine 5'-phosphosulfate (APS) using thioredoxin as an electron donor. This chain is Adenosine 5'-phosphosulfate reductase, found in Pseudomonas aeruginosa (strain LESB58).